We begin with the raw amino-acid sequence, 1372 residues long: Polysaccharide lyase 8 family protein HylA (1372 aa).

An N-terminal signal peptide occupies residues 1-25 (MIKKIIVVVAFMLTGFSLTAMSASA). One can recognise an F5/8 type C domain in the interval 63–172 (DGDETTRWSA…SIISFEAYEK (110 aa)). The region spanning 183–242 (TENLTISEKRKQQLAFEVSPAGVDITEDQIEWSSSDPTIVTVDQTGNLTAVKSGEAKVTV) is the BIG2 domain. Catalysis depends on residues histidine 487, tyrosine 496, and arginine 550. FIVAR domains are found at residues 1014-1075 (KEAL…VKQL), 1084-1146 (DKTN…VKQL), 1155-1217 (DKTN…VKQL), and 1226-1288 (DKTN…VKRL). The interval 1288 to 1336 (LTLKNSGENKKEQKNGGNNGHLNTSTGVDQTGTKQVKPSSQGGFRKASQ) is disordered. A compositionally biased stretch (polar residues) spans 1308–1329 (HLNTSTGVDQTGTKQVKPSSQG). An LPXTG sorting signal motif is present at residues 1338 to 1342 (LPSTG). Position 1341 is a pentaglycyl murein peptidoglycan amidated threonine (threonine 1341). Positions 1342 to 1372 (GEKKSIALVIIGLLVIASGCLLVFRKSKSKK) are cleaved as a propeptide — removed by sortase.

This sequence belongs to the polysaccharide lyase 8 family.

The protein resides in the secreted. Its subcellular location is the cell wall. Functionally, has a very modest degradation activity against heparin sodium salt (HS) in vitro. Involved in the pathogenesis of vancomycin-resistant E.faecalis infections. This chain is Polysaccharide lyase 8 family protein HylA, found in Enterococcus faecalis (strain ATCC 700802 / V583).